The sequence spans 301 residues: Zinc finger protein LEE1 (301 aa).

Positions 1–25 (MDAFENMSVSNHPGGNARRNSQSAN) are disordered. Positions 7-25 (MSVSNHPGGNARRNSQSAN) are enriched in polar residues. Phosphoserine is present on residues Ser21 and Ser30. C3H1-type zinc fingers lie at residues 87–114 (DYSH…HSPD) and 123–145 (PCKY…HVLP). Ser282 carries the post-translational modification Phosphoserine.

In Saccharomyces cerevisiae (strain ATCC 204508 / S288c) (Baker's yeast), this protein is Zinc finger protein LEE1 (LEE1).